The primary structure comprises 348 residues: Dihydroorotase (348 aa).

The Zn(2+) site is built by His-17 and His-19. Residues His-19–Arg-21 and Asn-45 each bind substrate. Lys-103, His-140, and His-178 together coordinate Zn(2+). Residue Lys-103 is modified to N6-carboxylysine. His-140 lines the substrate pocket. Leu-223 serves as a coordination point for substrate. Asp-251 contacts Zn(2+). Asp-251 is a catalytic residue. Residues His-255 and Ala-267 each contribute to the substrate site.

Belongs to the metallo-dependent hydrolases superfamily. DHOase family. Class II DHOase subfamily. As to quaternary structure, homodimer. Zn(2+) is required as a cofactor.

It carries out the reaction (S)-dihydroorotate + H2O = N-carbamoyl-L-aspartate + H(+). Its pathway is pyrimidine metabolism; UMP biosynthesis via de novo pathway; (S)-dihydroorotate from bicarbonate: step 3/3. Functionally, catalyzes the reversible cyclization of carbamoyl aspartate to dihydroorotate. The chain is Dihydroorotase from Shigella boydii serotype 4 (strain Sb227).